Consider the following 201-residue polypeptide: Outer-membrane lipoprotein LolB (201 aa).

Positions 1 to 18 (MKWCRLSIILMSLILLAG) are cleaved as a signal peptide. Residue Cys19 is the site of N-palmitoyl cysteine attachment. Cys19 is lipidated: S-diacylglycerol cysteine.

This sequence belongs to the LolB family. In terms of assembly, monomer.

The protein resides in the cell outer membrane. Plays a critical role in the incorporation of lipoproteins in the outer membrane after they are released by the LolA protein. The polypeptide is Outer-membrane lipoprotein LolB (Nitrosococcus oceani (strain ATCC 19707 / BCRC 17464 / JCM 30415 / NCIMB 11848 / C-107)).